We begin with the raw amino-acid sequence, 189 residues long: Accessory gene regulator protein B (189 aa).

5 helical membrane passes run 50–70 (VSLLCHMFLYTLTVHLTFFFI), 83–103 (LLCYIQSVIYFVLLPWIVGYV), 105–125 (VSSLIMYTLALVGLIIISIYA), 143–163 (KIKAICLTLIFLLISLFLNEP), and 164–184 (YQQLMLLGIVIISILQFPIFF).

This sequence belongs to the AgrB family.

It is found in the cell membrane. In terms of biological role, essential for the production of a quorum sensing system signal molecule, the autoinducing peptide (AIP). This quorum sensing system is responsible for the regulation of the expression of virulence factor genes. Involved in the proteolytic processing of AgrD, the precursor of AIP. The sequence is that of Accessory gene regulator protein B from Staphylococcus saprophyticus subsp. saprophyticus (strain ATCC 15305 / DSM 20229 / NCIMB 8711 / NCTC 7292 / S-41).